The chain runs to 537 residues: GTPase LSG1-1 (537 aa).

The CP-type G domain maps to 158–362 (WRQLWRVLER…LCDCPGLVFP (205 aa)). The DARXP motif motif lies at 176–180 (DARDP). The interval 206–209 (NKAD) is G4. 206–209 (NKAD) lines the GTP pocket. The interval 234-236 (SAK) is G5. The G1 stretch occupies residues 311 to 318 (GYPNVGKS). Position 314-319 (314-319 (NVGKSS)) interacts with GTP. Residues 337–341 (GKTKH) are G2. The tract at residues 355-358 (DCPG) is G3. G358 contacts GTP. A disordered region spans residues 484–508 (LGAETREGSQTEKKGEEAPSLGLDQ). Basic and acidic residues predominate over residues 487-500 (ETREGSQTEKKGEE).

It belongs to the TRAFAC class YlqF/YawG GTPase family. As to expression, ubiquitous, with the highest expression in stem and hypsophyll on day 66.

The protein resides in the cytoplasm. Its function is as follows. GTPase that might be redundant with LSG1-2 for ribosome biogenesis. Binds to 23S rRNA. The chain is GTPase LSG1-1 from Arabidopsis thaliana (Mouse-ear cress).